Consider the following 156-residue polypeptide: RING finger protein 224 (156 aa).

The segment at 24–71 (CIICCSAYDLSGHLPRRLYCGHTFCQACVRRLDTPAPEQRWIPCPQCR) adopts an RING-type zinc-finger fold.

The protein is RING finger protein 224 (RNF224) of Homo sapiens (Human).